Reading from the N-terminus, the 76-residue chain is UPF0248 protein MmarC6_0667 (76 aa).

The protein belongs to the UPF0248 family.

The protein is UPF0248 protein MmarC6_0667 of Methanococcus maripaludis (strain C6 / ATCC BAA-1332).